Here is a 217-residue protein sequence, read N- to C-terminus: Pyrophosphatase PpaX (217 aa).

Asp-11 (nucleophile) is an active-site residue.

It belongs to the HAD-like hydrolase superfamily. PpaX family. It depends on Mg(2+) as a cofactor.

It catalyses the reaction diphosphate + H2O = 2 phosphate + H(+). Functionally, hydrolyzes pyrophosphate formed during P-Ser-HPr dephosphorylation by HPrK/P. Might play a role in controlling the intracellular pyrophosphate pool. This is Pyrophosphatase PpaX from Listeria innocua serovar 6a (strain ATCC BAA-680 / CLIP 11262).